Reading from the N-terminus, the 94-residue chain is DNA-directed RNA polymerase subunit Rpo11 (94 aa).

Belongs to the archaeal Rpo11/eukaryotic RPB11/RPC19 RNA polymerase subunit family. As to quaternary structure, part of the RNA polymerase complex.

The protein resides in the cytoplasm. The catalysed reaction is RNA(n) + a ribonucleoside 5'-triphosphate = RNA(n+1) + diphosphate. In terms of biological role, DNA-dependent RNA polymerase (RNAP) catalyzes the transcription of DNA into RNA using the four ribonucleoside triphosphates as substrates. The protein is DNA-directed RNA polymerase subunit Rpo11 of Halobacterium salinarum (strain ATCC 700922 / JCM 11081 / NRC-1) (Halobacterium halobium).